The following is a 294-amino-acid chain: MKTKIIVIVGPTAVGKTALAIEVAKCFNGEVVSGDSQQVYRGLDIGTAKASPEEQAAVPHHLIDVREITESYSAFDFVSEAKMTIEDIHSRGKLAIIAGGTGLYIQSLLEGYHLGGETPHEEILAYRASLEPYSDEELAHLVEQAGLEIPQFNRRRAMRALEIAHFGQDLENQEILYEPLIICLDDERSQLYERINHRVDLMFEAGLLDEAKWLFDHSPNVQAAKGIGYKELFPYFRGEQTFEEARESLKQATRRFAKRQLTWFRNRMQVTFYQIGESGVQDRILSQIEEFLDD.

Position 10–17 (10–17 (GPTAVGKT)) interacts with ATP. 12 to 17 (TAVGKT) serves as a coordination point for substrate. Residues 35 to 38 (DSQQ) form an interaction with substrate tRNA region.

It belongs to the IPP transferase family. Monomer. Mg(2+) serves as cofactor.

The enzyme catalyses adenosine(37) in tRNA + dimethylallyl diphosphate = N(6)-dimethylallyladenosine(37) in tRNA + diphosphate. Catalyzes the transfer of a dimethylallyl group onto the adenine at position 37 in tRNAs that read codons beginning with uridine, leading to the formation of N6-(dimethylallyl)adenosine (i(6)A). The sequence is that of tRNA dimethylallyltransferase from Streptococcus pneumoniae (strain P1031).